The primary structure comprises 267 residues: Methylglyoxal reductase DkgB (267 aa).

The active-site Proton donor is the Tyr-39. A substrate-binding site is contributed by His-97. 179–231 (MTLAYGKALKDEVIARIAAKHNATPAQVILAWAMGEGYSVIPSSTRRENLASS) provides a ligand contact to NADP(+).

This sequence belongs to the aldo/keto reductase family. Monomer.

It is found in the cytoplasm. It carries out the reaction hydroxyacetone + NADP(+) = methylglyoxal + NADPH + H(+). Functionally, aldo-keto reductase that significantly contributes to cellular methylglyoxal detoxification by catalyzing the NADPH-dependent conversion of methylglyoxal to acetol. This is Methylglyoxal reductase DkgB from Salmonella typhimurium (strain LT2 / SGSC1412 / ATCC 700720).